Reading from the N-terminus, the 1317-residue chain is Toxin protein Tse5 (1317 aa).

The segment at 395–419 (GRETRRRRDGQGRMLEEESPGKARY) is disordered. Basic and acidic residues predominate over residues 403–415 (DGQGRMLEEESPG).

In terms of biological role, toxin secreted by the H1 type VI (H1-T6SS) secretion system that acts on bacterial target cells. The producing bacterium is protected by a cognate immunity protein. The protein is Toxin protein Tse5 of Pseudomonas aeruginosa (strain ATCC 15692 / DSM 22644 / CIP 104116 / JCM 14847 / LMG 12228 / 1C / PRS 101 / PAO1).